The sequence spans 241 residues: uncharacterized protein (241 aa).

The 55-residue stretch at 32-86 folds into the HTH cro/C1-type domain; it reads LKKWRNLFNIQQIELAKYLNVSPSVISDYEVGRRKNPGVNIIKKYVLALIEIDKE. A DNA-binding region (H-T-H motif) is located at residues 43 to 62; it reads QIELAKYLNVSPSVISDYEV.

This is an uncharacterized protein from Methanocaldococcus jannaschii (strain ATCC 43067 / DSM 2661 / JAL-1 / JCM 10045 / NBRC 100440) (Methanococcus jannaschii).